The primary structure comprises 135 residues: Large ribosomal subunit protein uL16c (135 aa).

This sequence belongs to the universal ribosomal protein uL16 family. As to quaternary structure, part of the 50S ribosomal subunit.

The protein resides in the plastid. It is found in the chloroplast. The sequence is that of Large ribosomal subunit protein uL16c from Olimarabidopsis pumila (Dwarf rocket).